The following is a 258-amino-acid chain: UPF0246 protein CJA_0191 (258 aa).

Belongs to the UPF0246 family.

This chain is UPF0246 protein CJA_0191, found in Cellvibrio japonicus (strain Ueda107) (Pseudomonas fluorescens subsp. cellulosa).